The following is a 239-amino-acid chain: 2,3,4,5-tetrahydropyridine-2,6-dicarboxylate N-acetyltransferase (239 aa).

The protein belongs to the transferase hexapeptide repeat family. DapH subfamily.

It catalyses the reaction (S)-2,3,4,5-tetrahydrodipicolinate + acetyl-CoA + H2O = L-2-acetamido-6-oxoheptanedioate + CoA. It functions in the pathway amino-acid biosynthesis; L-lysine biosynthesis via DAP pathway; LL-2,6-diaminopimelate from (S)-tetrahydrodipicolinate (acetylase route): step 1/3. In terms of biological role, catalyzes the transfer of an acetyl group from acetyl-CoA to tetrahydrodipicolinate. This chain is 2,3,4,5-tetrahydropyridine-2,6-dicarboxylate N-acetyltransferase, found in Staphylococcus aureus (strain Newman).